We begin with the raw amino-acid sequence, 165 residues long: Cyclic pyranopterin monophosphate synthase (165 aa).

Residues 78–80 (LCH) and 116–117 (ME) contribute to the substrate site. The active site involves D131.

The protein belongs to the MoaC family. In terms of assembly, homohexamer; trimer of dimers.

It carries out the reaction (8S)-3',8-cyclo-7,8-dihydroguanosine 5'-triphosphate = cyclic pyranopterin phosphate + diphosphate. It functions in the pathway cofactor biosynthesis; molybdopterin biosynthesis. Catalyzes the conversion of (8S)-3',8-cyclo-7,8-dihydroguanosine 5'-triphosphate to cyclic pyranopterin monophosphate (cPMP). In Sinorhizobium fredii (strain NBRC 101917 / NGR234), this protein is Cyclic pyranopterin monophosphate synthase.